The following is a 42-amino-acid chain: Envelope protein P10 (42 aa).

A helical transmembrane segment spans residues 20–40 (TTAAKIAVVYALVGLVGGLLL).

It localises to the virion membrane. Functionally, involved in cell lysis. The sequence is that of Envelope protein P10 (P10) from Pseudomonas savastanoi pv. phaseolicola (Pseudomonas syringae pv. phaseolicola).